The primary structure comprises 432 residues: Adhesin YadA (432 aa).

The signal sequence occupies residues 1-25; sequence MTKDFKISVSAALISALFSSPYAFA. The segment at 26–340 is surface exposed passenger domain; it reads EEPEDGNDGI…KKAISESNQY (315 aa). Positions 242–263 form a coiled coil; sequence VNVAQLKKEMAETLENARKETL. The tract at residues 341 to 379 is outer membrane translocation of the passenger domain; sequence TDHKFSQLDNRLDKLDKRVDKGLASSAALNSLFQPYGVG. 4 beta stranded membrane passes run 379-389, 393-404, 411-417, and 421-432; these read GKVNFTAGVGG, SQALAIGSGYRV, KAGVAYA, and NVMYNASFNIEW. The interval 380 to 432 is translocator domain; sequence KVNFTAGVGGYRSSQALAIGSGYRVNESVALKAGVAYAGSSNVMYNASFNIEW.

It belongs to the autotransporter-2 (AT-2) (TC 1.B.40) family. In terms of assembly, homotrimer.

Its subcellular location is the cell surface. The protein resides in the cell outer membrane. Functionally, collagen-binding outer membrane protein forming a fibrillar matrix on the bacterial cell surface. Promotes attachment to eukaryotic cells and after invasion, is the major adhesin in infected tissue. Constitutes an alternative uptake pathway under conditions in which invasin synthesis is repressed. The sequence is that of Adhesin YadA (yadA) from Yersinia pseudotuberculosis serotype I (strain IP32953).